The following is a 275-amino-acid chain: 3-methyl-2-oxobutanoate hydroxymethyltransferase (275 aa).

Residues D49 and D88 each contribute to the Mg(2+) site. 3-methyl-2-oxobutanoate-binding positions include 49-50 (DS), D88, and K118. E120 lines the Mg(2+) pocket. The Proton acceptor role is filled by E187.

Belongs to the PanB family. In terms of assembly, homodecamer; pentamer of dimers. Mg(2+) serves as cofactor.

It is found in the cytoplasm. The enzyme catalyses 3-methyl-2-oxobutanoate + (6R)-5,10-methylene-5,6,7,8-tetrahydrofolate + H2O = 2-dehydropantoate + (6S)-5,6,7,8-tetrahydrofolate. Its pathway is cofactor biosynthesis; (R)-pantothenate biosynthesis; (R)-pantoate from 3-methyl-2-oxobutanoate: step 1/2. Functionally, catalyzes the reversible reaction in which hydroxymethyl group from 5,10-methylenetetrahydrofolate is transferred onto alpha-ketoisovalerate to form ketopantoate. This Brucella suis (strain ATCC 23445 / NCTC 10510) protein is 3-methyl-2-oxobutanoate hydroxymethyltransferase.